Consider the following 133-residue polypeptide: Large ribosomal subunit protein uL15 (133 aa).

The interval 1 to 60 (MALENLKPAQGSTKDRKRVGRGQGSGMGKTSTRGGKGQTARTGYKAKRGFEGGQQPLQRR) is disordered.

It belongs to the universal ribosomal protein uL15 family. As to quaternary structure, part of the 50S ribosomal subunit.

In terms of biological role, binds to the 23S rRNA. The polypeptide is Large ribosomal subunit protein uL15 (Wolinella succinogenes (strain ATCC 29543 / DSM 1740 / CCUG 13145 / JCM 31913 / LMG 7466 / NCTC 11488 / FDC 602W) (Vibrio succinogenes)).